The chain runs to 1101 residues: Nuclear pore complex protein NUP107 (1101 aa).

The protein belongs to the nucleoporin Nup84/Nup107 family. As to quaternary structure, part of the nuclear pore complex (NPC). The NPC has an eight-fold symmetrical structure comprising a central transport channel and two rings, the cytoplasmic and nuclear rings, to which eight filaments are attached. The cytoplasmic filaments have loose ends, while the nuclear filaments are joined in a distal ring, forming a nuclear basket. NPCs are highly dynamic in configuration and composition, and can be devided in 3 subcomplexes, the NUP62 subcomplex, the NUP107-160 subcomplex and the NUP93 subcomplex, containing approximately 30 different nucleoporin proteins.

The protein localises to the nucleus envelope. The protein resides in the nucleus. Its subcellular location is the nuclear pore complex. In Arabidopsis thaliana (Mouse-ear cress), this protein is Nuclear pore complex protein NUP107.